A 591-amino-acid chain; its full sequence is Trihelix transcription factor PTL (591 aa).

The segment at 1-32 (MDQDQHPQYGIPELRQLMKGGGRTTTTTPSTS) is disordered. Residues 118 to 177 (GRWPRQETLTLLEIRSRLDHKFKEANQKGPLWDEVSRIMSEEHGYQRSGKKCREKFENLY) form the Myb-like 1 domain. A disordered region spans residues 380-410 (CSSPEERTNGNNEIRNNSETQNENGSDQTMT). Over residues 388–410 (NGNNEIRNNSETQNENGSDQTMT) the composition is skewed to polar residues. In terms of domain architecture, Myb-like 2 spans 422–479 (WGEQEILKLMEIRTSMDSTFQEILGGCSDEFLWEEIAAKLIQLGFDQRSALLCKEKWE). The tract at residues 491 to 551 (QINKKRKDNS…SNANANANVT (61 aa)) is disordered. Residues 515-534 (IYNNRESGYNDNDPHQINEQ) show a composition bias toward polar residues. Residues 535–551 (GNVGSSTSNANANANVT) show a composition bias toward low complexity.

Interacts with KIN10. As to expression, confined to flowers, at low levels. Also present in 7-days-old seedlings. Barely detectable in other tissues such as young seedlings, roots, stems, leaves and siliques. Expressed in flower primordia, more precisely between newly arisen sepal primordia and also at the basal margins of developing sepals.

It localises to the nucleus. Its function is as follows. Transcription factor that prevents growth. Regulates perianth architecture in flower, mostly in the second whorl, probably by suppressing growth between initiating sepals, ensuring that they remain separate, and by modulating organ shapes. Required for the establishment of auxin flux. The protein is Trihelix transcription factor PTL (PTL) of Arabidopsis thaliana (Mouse-ear cress).